The following is a 351-amino-acid chain: Nicotinate-nucleotide--dimethylbenzimidazole phosphoribosyltransferase (351 aa).

Glu317 acts as the Proton acceptor in catalysis.

The protein belongs to the CobT family.

It catalyses the reaction 5,6-dimethylbenzimidazole + nicotinate beta-D-ribonucleotide = alpha-ribazole 5'-phosphate + nicotinate + H(+). The protein operates within nucleoside biosynthesis; alpha-ribazole biosynthesis; alpha-ribazole from 5,6-dimethylbenzimidazole: step 1/2. Its function is as follows. Catalyzes the synthesis of alpha-ribazole-5'-phosphate from nicotinate mononucleotide (NAMN) and 5,6-dimethylbenzimidazole (DMB). This Pseudomonas aeruginosa (strain UCBPP-PA14) protein is Nicotinate-nucleotide--dimethylbenzimidazole phosphoribosyltransferase.